The sequence spans 176 residues: MVTKPARMYTRITGPAYTRKEFMGGVPYPKITTFVQGNQKRDFPIEMQLIAMESCQVRHTALEAARVSVNRRMTEAAGLDNFYLKVVPYPHHVLREHKMATGAGADRISSGMRAAFGRPVGTAARVYQNDVIMIGRTDEAHAHELKIALKKAAIKLPTPCKVVITKGKEIAGAIGV.

The protein belongs to the universal ribosomal protein uL16 family.

In Thermoplasma volcanium (strain ATCC 51530 / DSM 4299 / JCM 9571 / NBRC 15438 / GSS1), this protein is Large ribosomal subunit protein uL16.